Reading from the N-terminus, the 210-residue chain is Orotate phosphoribosyltransferase (210 aa).

Residues Arg-94, Lys-98, His-100, and 120 to 128 (EDLISTGGS) contribute to the 5-phospho-alpha-D-ribose 1-diphosphate site. Position 124 (Ser-124) interacts with orotate.

Belongs to the purine/pyrimidine phosphoribosyltransferase family. PyrE subfamily. Homodimer. The cofactor is Mg(2+).

The enzyme catalyses orotidine 5'-phosphate + diphosphate = orotate + 5-phospho-alpha-D-ribose 1-diphosphate. It functions in the pathway pyrimidine metabolism; UMP biosynthesis via de novo pathway; UMP from orotate: step 1/2. Catalyzes the transfer of a ribosyl phosphate group from 5-phosphoribose 1-diphosphate to orotate, leading to the formation of orotidine monophosphate (OMP). This is Orotate phosphoribosyltransferase from Halalkalibacterium halodurans (strain ATCC BAA-125 / DSM 18197 / FERM 7344 / JCM 9153 / C-125) (Bacillus halodurans).